Consider the following 263-residue polypeptide: Acyl-[acyl-carrier-protein]--UDP-N-acetylglucosamine O-acyltransferase (263 aa).

Belongs to the transferase hexapeptide repeat family. LpxA subfamily. In terms of assembly, homotrimer.

The protein localises to the cytoplasm. The enzyme catalyses a (3R)-hydroxyacyl-[ACP] + UDP-N-acetyl-alpha-D-glucosamine = a UDP-3-O-[(3R)-3-hydroxyacyl]-N-acetyl-alpha-D-glucosamine + holo-[ACP]. The protein operates within glycolipid biosynthesis; lipid IV(A) biosynthesis; lipid IV(A) from (3R)-3-hydroxytetradecanoyl-[acyl-carrier-protein] and UDP-N-acetyl-alpha-D-glucosamine: step 1/6. In terms of biological role, involved in the biosynthesis of lipid A, a phosphorylated glycolipid that anchors the lipopolysaccharide to the outer membrane of the cell. The chain is Acyl-[acyl-carrier-protein]--UDP-N-acetylglucosamine O-acyltransferase from Campylobacter jejuni subsp. jejuni serotype O:6 (strain 81116 / NCTC 11828).